Reading from the N-terminus, the 1059-residue chain is Zinc finger protein 628 (1059 aa).

6 C2H2-type zinc fingers span residues 36–58 (YECG…QRTH), 64–86 (YKCP…QRGH), 92–114 (YQCP…RSVH), 120–142 (FICG…LRQH), 148–170 (YPCP…RHVH), and 176–198 (YTCG…QRVH). Threonine 199 is subject to Phosphothreonine. The C2H2-type 7 zinc-finger motif lies at 204 to 226 (FRCPLCPKTFTHSSNLLLHQRTH). Disordered regions lie at residues 226–247 (HGAA…REPG), 260–280 (LQPH…PVVP), and 312–351 (EHQP…PAAA). The segment covering 228–237 (AAPAPGTASA) has biased composition (low complexity). Pro residues predominate over residues 263-279 (HSPPAPPAPPPPPPPVV). The span at 323-335 (PQPQEAPAEAPKA) shows a compositional bias: low complexity. The span at 336–351 (DQPPSPLPQPPPPAAA) shows a compositional bias: pro residues. 7 C2H2-type zinc fingers span residues 356–378 (FACL…QHSH), 386–408 (FRCG…QQCH), 454–476 (YKCA…LRDH), 482–504 (YQCG…QRVH), 510–532 (FTCG…LRLH), 538–560 (YACG…RHVH), and 566–588 (HACG…QRVH). Phosphothreonine is present on threonine 589. 2 C2H2-type zinc fingers span residues 594-616 (FRCP…QRTH) and 622-644 (FTCP…LRTH). Over residues 644–658 (HAPANTPPSTTAPAA) the composition is skewed to low complexity. Positions 644 to 674 (HAPANTPPSTTAPAAGPQPPAPLAAARAPPA) are disordered. 4 tandem repeats follow at residues 818-831 (VQLQ…EVTT), 832-842 (VQLQPAQEVTT), 843-853 (VQLQPAQEVTT), and 854-864 (VQLQPAQEVTT). Residues 818 to 864 (VQLQPLRPAPEVTTVQLQPAQEVTTVQLQPAQEVTTVQLQPAQEVTT) are 4 X approximate tandem repeats. The interaction with TAF4B stretch occupies residues 943–1059 (DGEQTRLCVQ…LPAVQLVHTF (117 aa)).

Interacts with TAF4B.

Its subcellular location is the nucleus. In terms of biological role, transcriptional activator. Binds DNA on GT-box consensus sequence 5'-TTGGTT-3'. Plays a role in spermiogenesis. The sequence is that of Zinc finger protein 628 (ZNF628) from Homo sapiens (Human).